The primary structure comprises 325 residues: Phospholipid phosphatase-related protein type 1 (325 aa).

3 consecutive transmembrane segments (helical) span residues 11–31, 67–87, and 127–147; these read YSII…TVLL, FISP…IIFI, and FIGV…AGQV. Asparagine 163 is a glycosylation site (N-linked (GlcNAc...) asparagine). Helical transmembrane passes span 201–218, 230–247, and 257–277; these read AALS…ITST, VLCL…LNRV, and VIGG…CVVH. N-linked (GlcNAc...) asparagine glycosylation occurs at asparagine 316.

Belongs to the PA-phosphatase related phosphoesterase family.

It is found in the cell membrane. Its subcellular location is the cell projection. The protein localises to the neuron projection. Its function is as follows. May play a role in neurite outgrowth and neurogenesis. The protein is Phospholipid phosphatase-related protein type 1 of Xenopus tropicalis (Western clawed frog).